The primary structure comprises 229 residues: Cytochrome b translational activator protein CBS1, mitochondrial (229 aa).

Residues 1-25 constitute a mitochondrion transit peptide; sequence MLRTKVFATTVARISGIRRYIPIRT.

The protein resides in the mitochondrion inner membrane. MRNA-specific translational activator of cytochrome b. The cytochrome b (COB) leader RNA may represent the target sequence for CBS1 and CBS2, tethering the COB mRNA to the inner mitochondrial membrane, where cotranslational insertion of cytochrome b into the membrane can occur. This is Cytochrome b translational activator protein CBS1, mitochondrial (CBS1) from Saccharomyces cerevisiae (strain ATCC 204508 / S288c) (Baker's yeast).